The sequence spans 1617 residues: Mediator of RNA polymerase II transcription subunit 12 (1617 aa).

Disordered stretches follow at residues 25-114 and 1519-1552; these read RADL…PSLS and PVSI…QPAF. Polar residues predominate over residues 40 to 51; that stretch reads EQPSMPVAQTQG. Residues 66-80 are compositionally biased toward basic and acidic residues; that stretch reads VLEREPPAKRLKIDV. Residues 99–111 are compositionally biased toward polar residues; it reads SKSTPGATTSKPP. Low complexity predominate over residues 1523-1543; it reads PSPAASGSTPAPTPSGNSTGG.

The protein belongs to the Mediator complex subunit 12 family. As to quaternary structure, component of the srb8-11 complex, which itself associates with the Mediator complex.

The protein localises to the nucleus. Functionally, component of the srb8-11 complex. The srb8-11 complex is a regulatory module of the Mediator complex which is itself involved in regulation of basal and activated RNA polymerase II-dependent transcription. The srb8-11 complex may be involved in the transcriptional repression of a subset of genes regulated by Mediator. It may inhibit the association of the Mediator complex with RNA polymerase II to form the holoenzyme complex. The chain is Mediator of RNA polymerase II transcription subunit 12 (srb8) from Aspergillus fumigatus (strain ATCC MYA-4609 / CBS 101355 / FGSC A1100 / Af293) (Neosartorya fumigata).